The following is a 163-amino-acid chain: Staphylokinase (163 aa).

Residues 1-27 (MLKRSLLFLTVLLLLFSFSSITNEVSA) form the signal peptide.

The protein belongs to the staphylokinase family.

It localises to the secreted. In terms of biological role, potent plasminogen activator that converts plasminogen into plasmin. It forms a 1:1 complex with plasmin, which in turn activates other plasminogen molecules. In Staphylococcus phage phi13 (Bacteriophage phi-13), this protein is Staphylokinase (sak).